The primary structure comprises 1008 residues: P3N-PIPO polyprotein (1008 aa).

A Peptidase S30 domain is found at 180-322; sequence QRANADVDHL…ECSKDKIHQY (143 aa). Active-site for P1 proteinase activity residues include His-233, Glu-242, and Ser-275. The Involved in interaction with stylet and aphid transmission signature appears at 374–377; the sequence is KVSC. An Involved in virions binding and aphid transmission motif is present at residues 631 to 633; the sequence is PTK. One can recognise a Peptidase C6 domain in the interval 657 to 779; it reads MYVAKEGYCY…VSEMKHYVVG (123 aa). Catalysis depends on for helper component proteinase activity residues Cys-665 and His-738.

Belongs to the potyviridae P3N-PIPO polyprotein family. As to quaternary structure, interacts (via PIPO domain) with host PCaP1 protein; this interaction may help to anchor the movement complex to the plasma membrane from which the complex could move to the plasmodesmata. Potyviral RNA is expressed as two polyproteins which undergo post-translational proteolytic processing. Genome polyprotein is processed by NIa-pro, P1 and HC-pro proteinases resulting in the production of at least ten individual proteins. P3N-PIPO is cleaved by P1 and HC-pro proteinases resulting in the production of three individual proteins. The P1 proteinase and the HC-pro cleave only their respective C-termini autocatalytically.

The protein localises to the host cell junction. It is found in the host plasmodesma. The enzyme catalyses Hydrolyzes a Gly-|-Gly bond at its own C-terminus, commonly in the sequence -Tyr-Xaa-Val-Gly-|-Gly, in the processing of the potyviral polyprotein.. Its function is as follows. Required for aphid transmission and also has proteolytic activity. Only cleaves a Gly-Gly dipeptide at its own C-terminus. Interacts with virions and aphid stylets. Acts as a suppressor of RNA-mediated gene silencing, also known as post-transcriptional gene silencing (PTGS), a mechanism of plant viral defense that limits the accumulation of viral RNAs. May have RNA-binding activity. Allows efficient cell to cell propagation, by bypassing the host cell wall barrier. Transports viral genome to neighboring plant cells directly through plasmosdesmata, without any budding. The polypeptide is P3N-PIPO polyprotein (Peanut mottle virus (strain M)).